We begin with the raw amino-acid sequence, 284 residues long: Shikimate dehydrogenase (NADP(+)) (284 aa).

Residues 20 to 22 (SIS) and Ser67 contribute to the shikimate site. Lys71 serves as the catalytic Proton acceptor. Asp83 lines the NADP(+) pocket. Shikimate is bound by residues Asn92 and Asp107. NADP(+) contacts are provided by residues 129–133 (GAGGA) and Ile227. Tyr229 contributes to the shikimate binding site. Residue Gly250 participates in NADP(+) binding.

The protein belongs to the shikimate dehydrogenase family. Homodimer.

The enzyme catalyses shikimate + NADP(+) = 3-dehydroshikimate + NADPH + H(+). It functions in the pathway metabolic intermediate biosynthesis; chorismate biosynthesis; chorismate from D-erythrose 4-phosphate and phosphoenolpyruvate: step 4/7. Involved in the biosynthesis of the chorismate, which leads to the biosynthesis of aromatic amino acids. Catalyzes the reversible NADPH linked reduction of 3-dehydroshikimate (DHSA) to yield shikimate (SA). This is Shikimate dehydrogenase (NADP(+)) from Streptococcus pneumoniae (strain P1031).